The chain runs to 1461 residues: Pleiotropic drug resistance protein 2 (1461 aa).

The region spanning 172–445 is the ABC transporter 1 domain; that stretch reads LGLIHLSPSK…FEYMGFRCPE (274 aa). 205-212 lines the ATP pocket; it reads GPPGSGKT. The ABC transmembrane type-2 1 domain occupies 523-736; it reads ELFKSCFTRE…GQNAIAINEF (214 aa). The next 6 membrane-spanning stretches (helical) occupy residues 541–561, 577–597, 622–642, 660–680, 685–705, and 771–791; these read FLYI…LTVF, FWGA…QELA, LPIW…WIIL, LLAF…IAAA, VVAN…GGFI, and ISIG…IAAL. The 253-residue stretch at 859 to 1111 folds into the ABC transporter 2 domain; it reads LAFNHVNYYV…KLVEYFETIP (253 aa). 904–911 provides a ligand contact to ATP; that stretch reads GVSGAGKT. Residues 1184–1398 form the ABC transmembrane type-2 2 domain; that stretch reads TQCKACFWKQ…TIYGIFASQV (215 aa). The next 7 membrane-spanning stretches (helical) occupy residues 1203–1223, 1243–1263, 1291–1311, 1321–1341, 1348–1368, 1379–1399, and 1430–1450; these read YNAI…VIFW, YAAV…VVAI, TIYV…MIGY, FYYF…MVVA, IAAI…GFLI, WYYW…SQVG, and FLLV…FVFA.

This sequence belongs to the ABC transporter superfamily. ABCG family. PDR (TC 3.A.1.205) subfamily.

Its subcellular location is the membrane. Functionally, may be a general defense protein. The chain is Pleiotropic drug resistance protein 2 (PDR2) from Nicotiana plumbaginifolia (Leadwort-leaved tobacco).